Reading from the N-terminus, the 417-residue chain is Gamma-glutamyl phosphate reductase (417 aa).

It belongs to the gamma-glutamyl phosphate reductase family.

Its subcellular location is the cytoplasm. It carries out the reaction L-glutamate 5-semialdehyde + phosphate + NADP(+) = L-glutamyl 5-phosphate + NADPH + H(+). It functions in the pathway amino-acid biosynthesis; L-proline biosynthesis; L-glutamate 5-semialdehyde from L-glutamate: step 2/2. Its function is as follows. Catalyzes the NADPH-dependent reduction of L-glutamate 5-phosphate into L-glutamate 5-semialdehyde and phosphate. The product spontaneously undergoes cyclization to form 1-pyrroline-5-carboxylate. In Legionella pneumophila (strain Corby), this protein is Gamma-glutamyl phosphate reductase.